A 259-amino-acid polypeptide reads, in one-letter code: DNA-directed RNA polymerase 30 kDa polypeptide (259 aa).

The TFIIS-type zinc finger occupies 155 to 195 (YNTPCPNCKSRNTTPMMIQTRAADEPPLVRHACRDCKQHFK). Residues C159, C162, C187, and C190 each coordinate Zn(2+). Residues 220–259 (EILPDNNPSPPESPEPASPIDDGLIRATFDRNDEPPEDDE) form a disordered region. A compositionally biased stretch (pro residues) spans 226–236 (NPSPPESPEPA).

The protein belongs to the poxviridae DNA-directed RNA polymerase 30 kDa subunit family. As to quaternary structure, the DNA-dependent RNA polymerase (vRNAP) consists of eight subunits encoded by early viral genes and termed according to their apparent molecular masses Rpo147, Rpo132, Rpo35, Rpo30, Rpo22, Rpo19, Rpo18, and Rpo7. The same holoenzyme, with the addition of the transcription-specificity factor RAP94, is used for early gene expression.

It localises to the virion. The protein resides in the host cytoplasm. The catalysed reaction is RNA(n) + a ribonucleoside 5'-triphosphate = RNA(n+1) + diphosphate. Its function is as follows. Part of the DNA-dependent RNA polymerase which catalyzes the transcription of viral DNA into RNA using the four ribonucleoside triphosphates as substrates. Responsible for the transcription of early, intermediate and late genes. DNA-dependent RNA polymerase associates with the early transcription factor (ETF), itself composed of OPG118 and OPG134, thereby allowing the early genes transcription. Late transcription, and probably also intermediate transcription, require newly synthesized RNA polymerase. The sequence is that of DNA-directed RNA polymerase 30 kDa polypeptide (OPG066) from Homo sapiens (Human).